We begin with the raw amino-acid sequence, 949 residues long: Nonsense-mediated mRNA decay factor SMG8 (949 aa).

3 disordered regions span residues 564 to 607 (SGAR…LSPT), 624 to 652 (NESQASSEQLSNSEQNTSSSGTSSADTEN), and 748 to 768 (PKQQHHTHHQQQHPGKKQQRW). Acidic residues predominate over residues 571 to 581 (EGDDEPEDEVV). The span at 594-607 (NTASNGCSQPLSPT) shows a compositional bias: polar residues. The segment covering 624-648 (NESQASSEQLSNSEQNTSSSGTSSA) has biased composition (low complexity). Residues 749-768 (KQQHHTHHQQQHPGKKQQRW) show a composition bias toward basic residues.

This sequence belongs to the SMG8 family.

Functionally, involved in nonsense-mediated decay (NMD) of mRNAs containing premature stop codons. Probable component of kinase complex containing nonC and recruited to stalled ribosomes. The polypeptide is Nonsense-mediated mRNA decay factor SMG8 (Drosophila erecta (Fruit fly)).